The primary structure comprises 65 residues: Large ribosomal subunit protein uL29 (65 aa).

This sequence belongs to the universal ribosomal protein uL29 family.

This Hyphomonas neptunium (strain ATCC 15444) protein is Large ribosomal subunit protein uL29.